A 236-amino-acid polypeptide reads, in one-letter code: 2,3,4,5-tetrahydropyridine-2,6-dicarboxylate N-acetyltransferase (236 aa).

Belongs to the transferase hexapeptide repeat family. DapH subfamily.

It carries out the reaction (S)-2,3,4,5-tetrahydrodipicolinate + acetyl-CoA + H2O = L-2-acetamido-6-oxoheptanedioate + CoA. It participates in amino-acid biosynthesis; L-lysine biosynthesis via DAP pathway; LL-2,6-diaminopimelate from (S)-tetrahydrodipicolinate (acetylase route): step 1/3. Catalyzes the transfer of an acetyl group from acetyl-CoA to tetrahydrodipicolinate. The chain is 2,3,4,5-tetrahydropyridine-2,6-dicarboxylate N-acetyltransferase from Clostridium botulinum (strain 657 / Type Ba4).